The primary structure comprises 449 residues: Anther-specific proline-rich protein APG (449 aa).

Residues 1 to 118 are compositionally biased toward pro residues; it reads PPKPQPKPPP…KPPAPSPPKP (118 aa). The tract at residues 1–123 is disordered; sequence PPKPQPKPPP…SPPKPQNKTI (123 aa). Ser132 (nucleophile) is an active-site residue. Active-site residues include Asp425 and His428.

Belongs to the 'GDSL' lipolytic enzyme family. Found in anther, only in male fertile plants.

The sequence is that of Anther-specific proline-rich protein APG (APG) from Brassica napus (Rape).